We begin with the raw amino-acid sequence, 279 residues long: Tryptophan synthase alpha chain (279 aa).

Catalysis depends on proton acceptor residues glutamate 50 and aspartate 61.

This sequence belongs to the TrpA family. As to quaternary structure, tetramer of two alpha and two beta chains.

It carries out the reaction (1S,2R)-1-C-(indol-3-yl)glycerol 3-phosphate + L-serine = D-glyceraldehyde 3-phosphate + L-tryptophan + H2O. It functions in the pathway amino-acid biosynthesis; L-tryptophan biosynthesis; L-tryptophan from chorismate: step 5/5. In terms of biological role, the alpha subunit is responsible for the aldol cleavage of indoleglycerol phosphate to indole and glyceraldehyde 3-phosphate. This chain is Tryptophan synthase alpha chain, found in Sinorhizobium fredii (strain NBRC 101917 / NGR234).